A 217-amino-acid polypeptide reads, in one-letter code: Non-structural protein NS3 (217 aa).

This sequence belongs to the orbivirus NS3 family.

In terms of biological role, may play a role in the release of virions from infected cells. The protein is Non-structural protein NS3 (Segment-10) of Camelus dromedarius (Dromedary).